Here is a 326-residue protein sequence, read N- to C-terminus: ELAV-like protein 1 (326 aa).

An N-acetylserine modification is found at serine 2. Serine 2 bears the Phosphoserine mark. One can recognise an RRM 1 domain in the interval 20-98; that stretch reads TNLIVNYLPQ…KTIKVSYARP (79 aa). 2 positions are modified to phosphoserine: serine 100 and serine 158. The RRM 2 domain maps to 106–186; that stretch reads ANLYISGLPR…EPITVKFAAN (81 aa). A Glycyl lysine isopeptide (Lys-Gly) (interchain with G-Cter in SUMO2) cross-link involves residue lysine 191. A phosphoserine mark is found at serine 197 and serine 202. Arginine 206 is modified (omega-N-methylarginine). Asymmetric dimethylarginine; by CARM1; alternate is present on arginine 217. An Omega-N-methylarginine; alternate modification is found at arginine 217. Phosphoserine is present on residues serine 221 and serine 318. The RRM 3 domain occupies 244–322; sequence WCIFIYNLGQ…KILQVSFKTN (79 aa).

The protein belongs to the RRM elav family. In terms of assembly, monomer and homodimer (in vitro). Interacts with ANP32A. Interacts with ZNF385A; the interaction is indirect and mRNA-dependent and may regulate p53/TP53 expression. Identified in a mRNP complex, at least composed of DHX9, DDX3X, ELAVL1, HNRNPU, IGF2BP1, ILF3, PABPC1, PCBP2, PTBP2, STAU1, STAU2, SYNCRIP and YBX1. Interacts with AGO1 and AGO2. Interacts with IGF2BP1. Interacts with IGF2BP2 and IGF2BP3. Interacts with HNRNPL. Interacts with DHX36; this interaction occurs in a RNA-dependent manner. Interacts with ILF3; this interaction occurs in a RNA-dependent manner. Interacts with PLEKHN1. Interacts with SHFL; the interaction increases in presence of RNA. Interacts with YBX1; interaction recruits ELAVL1 on C5-methylcytosine (m5C)-containing mRNAs, thereby promoting mRNA stability. Interacts with FXR1. Post-translationally, phosphorylated by MAPKAPK2. Phosphorylated by PRKCD. Methylated at Arg-217 by CARM1 in T-cells in response to LPS challenge.

Its subcellular location is the cytoplasm. The protein resides in the nucleus. It localises to the stress granule. The protein localises to the P-body. Functionally, RNA-binding protein that binds to the 3'-UTR region of mRNAs and increases their stability. Involved in embryonic stem cell (ESC) differentiation: preferentially binds mRNAs that are not methylated by N6-methyladenosine (m6A), stabilizing them, promoting ESC differentiation. Has also been shown to be capable of binding to m6A-containing mRNAs and contributes to MYC stability by binding to m6A-containing MYC mRNAs. Binds to poly-U elements and AU-rich elements (AREs) in the 3'-UTR of target mRNAs. Binds avidly to the AU-rich element in FOS and IL3/interleukin-3 mRNAs. In the case of the FOS AU-rich element, binds to a core element of 27 nucleotides that contain AUUUA, AUUUUA, and AUUUUUA motifs. Binds preferentially to the 5'-UUUU[AG]UUU-3' motif in vitro. With ZNF385A, binds the 3'-UTR of p53/TP53 mRNA to control their nuclear export induced by CDKN2A. Hence, may regulate p53/TP53 expression and mediate in part the CDKN2A anti-proliferative activity. May also bind with ZNF385A the CCNB1 mRNA. Increases the stability of the leptin mRNA harboring an AU-rich element (ARE) in its 3' UTR. This chain is ELAV-like protein 1 (Elavl1), found in Mus musculus (Mouse).